We begin with the raw amino-acid sequence, 760 residues long: Photosystem I P700 chlorophyll a apoprotein A1 (760 aa).

The tract at residues 1-22 (MTISPPESGEKDKKILESPVKA) is disordered. Positions 8–22 (SGEKDKKILESPVKA) are enriched in basic and acidic residues. 8 helical membrane-spanning segments follow: residues 76-99 (IFSAHFGHLAVIFIWMSAAFFHGA), 162-185 (LMALAIGAVVMAALMLHAGIFHYH), 201-225 (MNHHLAGLLGLGSLAWAGHTIHIGA), 309-327 (IAHHHLAIAVLFIIAGHMY), 368-391 (RHAQLSVNLALLGSLSIIISHHMY), 407-433 (LGLFTHHMWIGGLFIVGAGAHAGIAMV), 455-477 (ALISHLNWVCMWLGFHSFGLYIH), and 551-569 (LMIHHIHAFQIHVTVLILL). The [4Fe-4S] cluster site is built by Cys593 and Cys602. 2 helical membrane-spanning segments follow: residues 609–630 (HVFLALFWMYNCLSIVIFHFSW) and 674–696 (ISMYGLMFLGAHFIWAFSLMFLF). His685 provides a ligand contact to divinylchlorophyll a'. Residues Met693 and Tyr701 each coordinate divinyl chlorophyll a. Phylloquinone is bound at residue Trp702. Residues 734–754 (AVGVTHFLVGGIATTWAFFHA) traverse the membrane as a helical segment.

This sequence belongs to the PsaA/PsaB family. In terms of assembly, the PsaA/B heterodimer binds the P700 divinyl chlorophyll special pair and subsequent electron acceptors. PSI consists of a core antenna complex that captures photons, and an electron transfer chain that converts photonic excitation into a charge separation. The cyanobacterial PSI reaction center is composed of one copy each of PsaA,B,C,D,E,F,I,J,K,L,M and X, and forms trimeric complexes. PSI electron transfer chain: 5 divinyl chlorophyll a, 1 divinyl chlorophyll a', 2 phylloquinones and 3 4Fe-4S clusters. PSI core antenna: 90 divinyl chlorophyll a, 22 carotenoids, 3 phospholipids and 1 galactolipid. P700 is a divinyl chlorophyll a/divinyl chlorophyll a' dimer, A0 is one or more divinyl chlorophyll a, A1 is one or both phylloquinones and FX is a shared 4Fe-4S iron-sulfur center. is required as a cofactor.

Its subcellular location is the cellular thylakoid membrane. The catalysed reaction is reduced [plastocyanin] + hnu + oxidized [2Fe-2S]-[ferredoxin] = oxidized [plastocyanin] + reduced [2Fe-2S]-[ferredoxin]. In terms of biological role, psaA and PsaB bind P700, the primary electron donor of photosystem I (PSI), as well as the electron acceptors A0, A1 and FX. PSI is a plastocyanin/cytochrome c6-ferredoxin oxidoreductase, converting photonic excitation into a charge separation, which transfers an electron from the donor P700 chlorophyll pair to the spectroscopically characterized acceptors A0, A1, FX, FA and FB in turn. Oxidized P700 is reduced on the lumenal side of the thylakoid membrane by plastocyanin or cytochrome c6. The protein is Photosystem I P700 chlorophyll a apoprotein A1 of Prochlorococcus marinus (strain MIT 9515).